The sequence spans 291 residues: Ribosomal RNA small subunit methyltransferase A (291 aa).

Residues H37, L39, G64, E85, D110, and N131 each contribute to the S-adenosyl-L-methionine site.

The protein belongs to the class I-like SAM-binding methyltransferase superfamily. rRNA adenine N(6)-methyltransferase family. RsmA subfamily.

Its subcellular location is the cytoplasm. It carries out the reaction adenosine(1518)/adenosine(1519) in 16S rRNA + 4 S-adenosyl-L-methionine = N(6)-dimethyladenosine(1518)/N(6)-dimethyladenosine(1519) in 16S rRNA + 4 S-adenosyl-L-homocysteine + 4 H(+). Specifically dimethylates two adjacent adenosines (A1518 and A1519) in the loop of a conserved hairpin near the 3'-end of 16S rRNA in the 30S particle. May play a critical role in biogenesis of 30S subunits. The polypeptide is Ribosomal RNA small subunit methyltransferase A (Dehalococcoides mccartyi (strain ATCC BAA-2100 / JCM 16839 / KCTC 5957 / BAV1)).